Here is a 619-residue protein sequence, read N- to C-terminus: Zinc finger protein 668 (619 aa).

Methionine 1 bears the N-acetylmethionine mark. Serine 10 is modified (phosphoserine). The segment at 22–44 (YKCLSCTKTFPNAPRAARHAATH) adopts a C2H2-type 1 zinc-finger fold. The segment at 34–79 (APRAARHAATHGPADCSEEVAEVKPKPETEAKAEEASGEKVSGSAA) is disordered. A compositionally biased stretch (basic and acidic residues) spans 54–71 (AEVKPKPETEAKAEEASG). Residues lysine 57, lysine 59, lysine 65, and lysine 80 each participate in a glycyl lysine isopeptide (Lys-Gly) (interchain with G-Cter in SUMO2) cross-link. 11 C2H2-type zinc fingers span residues 84–106 (YACPLCPKAYKTAPELRSHGRSH), 112–134 (FPCPECGRRFMQPVCLRVHLASH), 140–162 (FRCAHCPKAYGALSKLKIHQRGH), 168–190 (YACADCGKSFADPSVFRKHRRTH), 196–218 (YSCERCGKAYAELKDLRNHERSH), 224–246 (FLCSECGKSFSRSSSLTCHQRIH), 252–274 (YRCPACGKGFTQLSSYQSHERTH), 280–302 (FLCPRCGRMFSDPSSFRRHQRAH), 308–330 (YHCEKCGKDFRQPADLAMHRRVH), 336–358 (FKCLQCDKTFVASWDLKRHALVH), and 364–386 (FRCEECGRAFAERASLTKHSRVH). Lysine 154 participates in a covalent cross-link: Glycyl lysine isopeptide (Lys-Gly) (interchain with G-Cter in SUMO2). Serine 387 is subject to Phosphoserine. Residues 392-414 (FHCNACGKSFVVSSSLRKHERTH) form a C2H2-type 13 zinc finger. Residues 492–513 (REAPGPLEGAGEAGGEEADEKP) are disordered. Lysine 512 is covalently cross-linked (Glycyl lysine isopeptide (Lys-Gly) (interchain with G-Cter in SUMO2)). 3 C2H2-type zinc fingers span residues 516–538 (FVCRECKETFSTMTLLRRHERSH), 544–566 (FPCTQCGKSFSDRAGLRKHSRTH), and 572–594 (YTCPHCPKAFLSASDLRKHERTH).

The protein belongs to the krueppel C2H2-type zinc-finger protein family.

It localises to the nucleus. May be involved in transcriptional regulation. May play a role in DNA repair process. This chain is Zinc finger protein 668 (ZNF668), found in Homo sapiens (Human).